A 132-amino-acid polypeptide reads, in one-letter code: Z-ring associated protein G (132 aa).

A helical transmembrane segment spans residues Met-1 to Met-21. The disordered stretch occupies residues Phe-95–Asp-132.

It belongs to the ZapG family.

Its subcellular location is the cell inner membrane. Functionally, involved in cell division, cell envelope biogenesis and cell shape maintenance. The protein is Z-ring associated protein G of Escherichia coli O157:H7.